The chain runs to 424 residues: UDP-N-acetylglucosamine 1-carboxyvinyltransferase (424 aa).

Residue 22-23 (KN) coordinates phosphoenolpyruvate. Arg-96 serves as a coordination point for UDP-N-acetyl-alpha-D-glucosamine. Cys-120 serves as the catalytic Proton donor. Residue Cys-120 is modified to 2-(S-cysteinyl)pyruvic acid O-phosphothioketal. UDP-N-acetyl-alpha-D-glucosamine is bound by residues 125 to 129 (RPVDQ), Asp-312, and Ile-334.

This sequence belongs to the EPSP synthase family. MurA subfamily.

The protein localises to the cytoplasm. The catalysed reaction is phosphoenolpyruvate + UDP-N-acetyl-alpha-D-glucosamine = UDP-N-acetyl-3-O-(1-carboxyvinyl)-alpha-D-glucosamine + phosphate. It participates in cell wall biogenesis; peptidoglycan biosynthesis. Its function is as follows. Cell wall formation. Adds enolpyruvyl to UDP-N-acetylglucosamine. The chain is UDP-N-acetylglucosamine 1-carboxyvinyltransferase from Polynucleobacter necessarius subsp. necessarius (strain STIR1).